Reading from the N-terminus, the 232-residue chain is UPF0502 protein Aave_3438 (232 aa).

The protein belongs to the UPF0502 family.

This chain is UPF0502 protein Aave_3438, found in Paracidovorax citrulli (strain AAC00-1) (Acidovorax citrulli).